The primary structure comprises 356 residues: Heparan sulfate 2-O-sulfotransferase 1 (356 aa).

Over 1–11 the chain is Cytoplasmic; sequence MGLLRIMLPPK. A helical; Signal-anchor for type II membrane protein transmembrane segment spans residues 12 to 28; the sequence is LQLLAVLVFGVAVLFLE. A coiled-coil region spans residues 24–51; the sequence is VLFLENQIQKLEESRGKLERAIARHEVR. Topologically, residues 29 to 356 are lumenal; it reads NQIQKLEESR…FYEKIYPKSN (328 aa). Positions 83, 84, 85, 86, 87, and 88 each coordinate adenosine 3',5'-bisphosphate. N-linked (GlcNAc...) asparagine glycosylation is found at asparagine 108 and asparagine 127. Active-site residues include histidine 140 and histidine 142. Residues arginine 164 and serine 172 each coordinate adenosine 3',5'-bisphosphate. Disulfide bonds link cysteine 201–cysteine 209 and cysteine 222–cysteine 228. Residues tyrosine 279, serine 285, threonine 290, and lysine 293 each contribute to the adenosine 3',5'-bisphosphate site.

Belongs to the sulfotransferase 3 family. Homotrimer. As to expression, expressed in heart, limb, head and trunk. At stages 20 and 24, it is expressed in the most regions of the first and second pharyngeal arche. In both wing and leg buds, it is detected at the overlying ectoderm and mesenchyme throughout stages 21, 23 and 24.

The protein localises to the golgi apparatus membrane. Functionally, catalyzes the transfer of a sulfo group from 3'-phospho-5'-adenylyl sulfate (PAPS) to the 2-OH position of iduronic acid (IdoA) or glucuronic acid (GlcA) within the heparan sulfate (HS) chain and participates in HS biosynthesis. The chain is Heparan sulfate 2-O-sulfotransferase 1 from Gallus gallus (Chicken).